Reading from the N-terminus, the 218-residue chain is Epoxyqueuosine reductase QueH (218 aa).

[4Fe-4S] cluster contacts are provided by Cys22, Cys23, Cys101, and Cys104. Residues Cys184 and Cys186 are joined by a disulfide bond.

The protein belongs to the QueH family.

The catalysed reaction is epoxyqueuosine(34) in tRNA + AH2 = queuosine(34) in tRNA + A + H2O. It participates in tRNA modification; tRNA-queuosine biosynthesis. Its function is as follows. Catalyzes the conversion of epoxyqueuosine (oQ) to queuosine (Q), which is a hypermodified base found in the wobble positions of tRNA(Asp), tRNA(Asn), tRNA(His) and tRNA(Tyr). The chain is Epoxyqueuosine reductase QueH from Acinetobacter baylyi (strain ATCC 33305 / BD413 / ADP1).